A 525-amino-acid chain; its full sequence is GMP synthase [glutamine-hydrolyzing] (525 aa).

Positions 9-207 (RILILDFGSQ…VQDICGCEAL (199 aa)) constitute a Glutamine amidotransferase type-1 domain. Catalysis depends on Cys-86, which acts as the Nucleophile. Catalysis depends on residues His-181 and Glu-183. A GMPS ATP-PPase domain is found at 208–400 (WTPSNIVEDA…LGLPYDMVYR (193 aa)). Position 235 to 241 (235 to 241 (SGGVDSS)) interacts with ATP.

As to quaternary structure, homodimer.

It catalyses the reaction XMP + L-glutamine + ATP + H2O = GMP + L-glutamate + AMP + diphosphate + 2 H(+). Its pathway is purine metabolism; GMP biosynthesis; GMP from XMP (L-Gln route): step 1/1. Functionally, catalyzes the synthesis of GMP from XMP. The protein is GMP synthase [glutamine-hydrolyzing] of Pseudomonas putida (strain W619).